The sequence spans 310 residues: Isoflavone reductase homolog A622-like (310 aa).

Residues 13-19 (GGTGYIG), Arg38, and Lys47 each bind NADP(+). The active-site Proton acceptor is Lys135. Arg139 contacts NADP(+).

Belongs to the NmrA-type oxidoreductase family. Isoflavone reductase subfamily. Monomer. In terms of tissue distribution, expressed in roots.

It localises to the cytoplasm. It participates in alkaloid biosynthesis; nicotine biosynthesis. Functionally, involved in the biosynthesis of pyridine alkaloid natural products, leading mainly to the production of anabasine, anatabine, nicotine and nornicotine, effective deterrents against herbivores with antiparasitic and pesticide properties (neurotoxins); nornicotine serves as the precursor in the synthesis of the carcinogen compound N'-nitrosonornicotine (NNN). Reductase that may be involved in a late step of tobacco alkaloid biosynthesis. Maybe involved in either the formation of a nicotinic acid-derived precursor or the final condensation reaction of tobacco alkaloids. The protein is Isoflavone reductase homolog A622-like of Nicotiana tabacum (Common tobacco).